The primary structure comprises 498 residues: Glycerol kinase 1 (498 aa).

Residue threonine 12 participates in ADP binding. The ATP site is built by threonine 12, threonine 13, and serine 14. Threonine 12 is a sn-glycerol 3-phosphate binding site. Arginine 16 serves as a coordination point for ADP. Residues arginine 82, glutamate 83, tyrosine 134, and aspartate 243 each coordinate sn-glycerol 3-phosphate. Glycerol contacts are provided by arginine 82, glutamate 83, tyrosine 134, aspartate 243, and glutamine 244. ADP is bound by residues threonine 265 and glycine 308. ATP contacts are provided by threonine 265, glycine 308, glutamine 312, and glycine 409. ADP is bound by residues glycine 409 and asparagine 413.

Belongs to the FGGY kinase family. In terms of assembly, homotetramer and homodimer (in equilibrium).

The enzyme catalyses glycerol + ATP = sn-glycerol 3-phosphate + ADP + H(+). The protein operates within polyol metabolism; glycerol degradation via glycerol kinase pathway; sn-glycerol 3-phosphate from glycerol: step 1/1. Its activity is regulated as follows. Activated by phosphorylation and inhibited by fructose 1,6-bisphosphate (FBP). Key enzyme in the regulation of glycerol uptake and metabolism. Catalyzes the phosphorylation of glycerol to yield sn-glycerol 3-phosphate. This chain is Glycerol kinase 1, found in Clostridium tetani (strain Massachusetts / E88).